The chain runs to 549 residues: T-complex protein 1 subunit theta (549 aa).

The protein belongs to the TCP-1 chaperonin family. In terms of assembly, heterooligomeric complex of about 850 to 900 kDa that forms two stacked rings, 12 to 16 nm in diameter. Interacts with CCT3, KNAT1, STM and TTG1. In terms of tissue distribution, expressed in shoot meristems, root tip, vasculature and leaf epidermis.

The protein resides in the cytoplasm. Its function is as follows. Molecular chaperone; assists the folding of proteins upon ATP hydrolysis. Known to play a role, in vitro, in the folding of actin and tubulin. Contributes to stem cell maintenance through its impact on transcription factors trafficking through plasmodesmata. Probably involved in refolding translocated, partially unfolded proteins, including viral movement proteins. The sequence is that of T-complex protein 1 subunit theta from Arabidopsis thaliana (Mouse-ear cress).